We begin with the raw amino-acid sequence, 364 residues long: Chorismate synthase (364 aa).

Arginine 48 contributes to the NADP(+) binding site. FMN-binding positions include 125–127 (RSS), 237–238 (NA), glycine 277, 292–296 (KPTSS), and arginine 318.

It belongs to the chorismate synthase family. Homotetramer. It depends on FMNH2 as a cofactor.

It catalyses the reaction 5-O-(1-carboxyvinyl)-3-phosphoshikimate = chorismate + phosphate. It functions in the pathway metabolic intermediate biosynthesis; chorismate biosynthesis; chorismate from D-erythrose 4-phosphate and phosphoenolpyruvate: step 7/7. Functionally, catalyzes the anti-1,4-elimination of the C-3 phosphate and the C-6 proR hydrogen from 5-enolpyruvylshikimate-3-phosphate (EPSP) to yield chorismate, which is the branch point compound that serves as the starting substrate for the three terminal pathways of aromatic amino acid biosynthesis. This reaction introduces a second double bond into the aromatic ring system. In Albidiferax ferrireducens (strain ATCC BAA-621 / DSM 15236 / T118) (Rhodoferax ferrireducens), this protein is Chorismate synthase.